The primary structure comprises 95 residues: Aspartyl/glutamyl-tRNA(Asn/Gln) amidotransferase subunit C (95 aa).

It belongs to the GatC family. In terms of assembly, heterotrimer of A, B and C subunits.

It catalyses the reaction L-glutamyl-tRNA(Gln) + L-glutamine + ATP + H2O = L-glutaminyl-tRNA(Gln) + L-glutamate + ADP + phosphate + H(+). The enzyme catalyses L-aspartyl-tRNA(Asn) + L-glutamine + ATP + H2O = L-asparaginyl-tRNA(Asn) + L-glutamate + ADP + phosphate + 2 H(+). Its function is as follows. Allows the formation of correctly charged Asn-tRNA(Asn) or Gln-tRNA(Gln) through the transamidation of misacylated Asp-tRNA(Asn) or Glu-tRNA(Gln) in organisms which lack either or both of asparaginyl-tRNA or glutaminyl-tRNA synthetases. The reaction takes place in the presence of glutamine and ATP through an activated phospho-Asp-tRNA(Asn) or phospho-Glu-tRNA(Gln). The polypeptide is Aspartyl/glutamyl-tRNA(Asn/Gln) amidotransferase subunit C (Jannaschia sp. (strain CCS1)).